Reading from the N-terminus, the 319-residue chain is N-acetyl-D-glucosamine kinase (319 aa).

Residue Thr-14 participates in ATP binding. Substrate is bound by residues Asn-37 and Asp-113. Position 135 (Thr-135) interacts with ATP. Substrate is bound by residues 153 to 155 (GWG) and Asp-160. Ala-220 lines the ATP pocket.

Belongs to the eukaryotic-type N-acetylglucosamine kinase family. As to quaternary structure, homodimer.

It catalyses the reaction N-acetyl-D-glucosamine + ATP = N-acetyl-D-glucosamine 6-phosphate + ADP + H(+). In terms of biological role, converts N-acetylglucosamine (GlcNAc), a major component of complex carbohydrates, into GlcNAc 6-phosphate. Also has ManNAc kinase activity. This chain is N-acetyl-D-glucosamine kinase (nagk), found in Dictyostelium discoideum (Social amoeba).